Reading from the N-terminus, the 91-residue chain is Late embryogenis abundant protein 2 (91 aa).

A disordered region spans residues 47–72 (KRAGEASSEKAPWVPDPKTGYYRPET).

This sequence belongs to the LEA type 3 family.

It is found in the cytoplasm. It localises to the nucleus. The sequence is that of Late embryogenis abundant protein 2 from Arabidopsis thaliana (Mouse-ear cress).